We begin with the raw amino-acid sequence, 355 residues long: MSSDTMFINSARLLPTENRKVKQLQRPDRKKHTRGSYAAQKQQLPNGEQPNFGHGQKQSRKRGSGRQKGRDGAAGDSANVGLTEDLKQLLSIPSGSAGSESAQKETSAGQPATGAVADRKRSVPAGGPAGKSSSEPASASSAVDGMPGLGFQSAHVPFSSPVVNHPMLAEPAATGPVLSVPFPGHVAGYMPCVNNTRVQYPLQTRNNVPMSQPMSQPMSQPMSQPMSQPMSQPISPYLPQGFQMHPQSFVGLPVAPMYPQYMSAQYQSPKQQSACQMPLRAQPPLIPSITRNALPCVSSANSTAKASVRSKGSPGSEGGSRRSQNWKSSQNVGYAGATFATDQPALSSLPKPSFV.

Disordered stretches follow at residues 1–146 (MSSD…VDGM), 210–230 (MSQP…SQPM), and 301–330 (NSTA…KSSQ). Polar residues predominate over residues 39–49 (AQKQQLPNGEQ). Over residues 57 to 67 (KQSRKRGSGRQ) the composition is skewed to basic residues. The segment covering 91–110 (SIPSGSAGSESAQKETSAGQ) has biased composition (polar residues). Low complexity predominate over residues 123–142 (VPAGGPAGKSSSEPASASSA).

The protein belongs to the EDC family.

Its subcellular location is the cytoplasm. Its function is as follows. mRNA-binding protein which stimulates mRNA decapping. The chain is Enhancer of mRNA-decapping protein 1 (EDC1) from Eremothecium gossypii (strain ATCC 10895 / CBS 109.51 / FGSC 9923 / NRRL Y-1056) (Yeast).